Reading from the N-terminus, the 609-residue chain is NADH-ubiquinone oxidoreductase chain 5 (609 aa).

16 consecutive transmembrane segments (helical) span residues 3 to 23 (VINL…LPIV), 41 to 61 (TAIS…IYSG), 90 to 110 (MIFV…SMWY), 115 to 135 (PFIN…MILV), 140 to 160 (LFQL…LIGW), 174 to 194 (AVLY…WFLI), 214 to 236 (VPLM…HPWL), 244 to 264 (TPVS…FLLI), 276 to 296 (MQTT…ICAL), 304 to 323 (IIAF…IGIN), 328 to 350 (AFLH…GSII), 368 to 388 (VLPF…GMPF), 410 to 432 (WALL…IMFF), 460 to 480 (LLLG…PTST), 491 to 511 (LMAL…NLTS), and 585 to 605 (GLIK…LMMI).

It belongs to the complex I subunit 5 family. In terms of assembly, core subunit of respiratory chain NADH dehydrogenase (Complex I) which is composed of 45 different subunits.

It is found in the mitochondrion inner membrane. It catalyses the reaction a ubiquinone + NADH + 5 H(+)(in) = a ubiquinol + NAD(+) + 4 H(+)(out). In terms of biological role, core subunit of the mitochondrial membrane respiratory chain NADH dehydrogenase (Complex I) which catalyzes electron transfer from NADH through the respiratory chain, using ubiquinone as an electron acceptor. Essential for the catalytic activity and assembly of complex I. The polypeptide is NADH-ubiquinone oxidoreductase chain 5 (MT-ND5) (Halichoerus grypus (Gray seal)).